A 416-amino-acid chain; its full sequence is Adenylosuccinate synthetase (416 aa).

GTP-binding positions include 13 to 19 and 41 to 43; these read GDEGKGK and GHT. The Proton acceptor role is filled by aspartate 14. Mg(2+) contacts are provided by aspartate 14 and glycine 41. IMP contacts are provided by residues 14-17, 39-42, threonine 126, arginine 140, glutamine 220, threonine 235, and arginine 299; these read DEGK and NAGH. Histidine 42 serves as the catalytic Proton donor. Residue 295–301 coordinates substrate; sequence VSTGRKR. GTP-binding positions include arginine 301, 327 to 329, and 405 to 407; these read KLD and STS.

The protein belongs to the adenylosuccinate synthetase family. As to quaternary structure, homodimer. It depends on Mg(2+) as a cofactor.

The protein resides in the cytoplasm. It carries out the reaction IMP + L-aspartate + GTP = N(6)-(1,2-dicarboxyethyl)-AMP + GDP + phosphate + 2 H(+). The protein operates within purine metabolism; AMP biosynthesis via de novo pathway; AMP from IMP: step 1/2. Plays an important role in the de novo pathway of purine nucleotide biosynthesis. Catalyzes the first committed step in the biosynthesis of AMP from IMP. This chain is Adenylosuccinate synthetase, found in Campylobacter jejuni subsp. jejuni serotype O:2 (strain ATCC 700819 / NCTC 11168).